Here is a 150-residue protein sequence, read N- to C-terminus: UPF0178 protein Shewmr4_1560 (150 aa).

It belongs to the UPF0178 family.

This chain is UPF0178 protein Shewmr4_1560, found in Shewanella sp. (strain MR-4).